Here is a 583-residue protein sequence, read N- to C-terminus: Isocitrate dehydrogenase kinase/phosphatase (583 aa).

Residues 315 to 321 (APGIRGM) and lysine 336 each bind ATP. Aspartate 371 is an active-site residue.

It belongs to the AceK family.

The protein resides in the cytoplasm. It carries out the reaction L-seryl-[isocitrate dehydrogenase] + ATP = O-phospho-L-seryl-[isocitrate dehydrogenase] + ADP + H(+). Bifunctional enzyme which can phosphorylate or dephosphorylate isocitrate dehydrogenase (IDH) on a specific serine residue. This is a regulatory mechanism which enables bacteria to bypass the Krebs cycle via the glyoxylate shunt in response to the source of carbon. When bacteria are grown on glucose, IDH is fully active and unphosphorylated, but when grown on acetate or ethanol, the activity of IDH declines drastically concomitant with its phosphorylation. The sequence is that of Isocitrate dehydrogenase kinase/phosphatase from Salmonella paratyphi C (strain RKS4594).